We begin with the raw amino-acid sequence, 268 residues long: Uronate dehydrogenase (268 aa).

Residues 17-18, 37-39, 55-56, and 75-79 each bind NAD(+); these read GL, DIS, DL, and FGGVS. Substrate is bound by residues Ser79 and 115–117; that span reads SNH. Tyr140 (proton acceptor) is an active-site residue. Residue Lys144 participates in NAD(+) binding. Ser169 serves as a coordination point for substrate. Position 170 (Ser170) interacts with NAD(+). Substrate is bound at residue Arg178.

This sequence belongs to the NAD(P)-dependent epimerase/dehydratase family. In terms of assembly, homohexamer.

It catalyses the reaction beta-D-galacturonate + NAD(+) = D-galactaro-1,5-lactone + NADH + H(+). The enzyme catalyses beta-D-glucuronate + NAD(+) = D-glucaro-1,5-lactone + NADH + H(+). The protein operates within carbohydrate acid metabolism; D-galacturonate degradation via prokaryotic oxidative pathway. Catalyzes the oxidation of beta-D-galacturonate and beta-D-glucuronate to galactarate and D-glucarate, respectively. This chain is Uronate dehydrogenase (udh), found in Pseudomonas putida (strain ATCC 47054 / DSM 6125 / CFBP 8728 / NCIMB 11950 / KT2440).